A 90-amino-acid polypeptide reads, in one-letter code: Probable Fe(2+)-trafficking protein (90 aa).

Belongs to the Fe(2+)-trafficking protein family.

In terms of biological role, could be a mediator in iron transactions between iron acquisition and iron-requiring processes, such as synthesis and/or repair of Fe-S clusters in biosynthetic enzymes. The chain is Probable Fe(2+)-trafficking protein from Coxiella burnetii (strain CbuK_Q154) (Coxiella burnetii (strain Q154)).